The primary structure comprises 291 residues: Lectin (291 aa).

An N-terminal signal peptide occupies residues 1 to 28 (MGISKKSQLVPLLAFITMFLMVVSRVSS). D118 contributes to the Ca(2+) binding site. R138 contacts a carbohydrate. The propeptide at 147 to 162 (NIIKNSTNLDFNAAYN) is removed in mature form. Mn(2+)-binding residues include E170 and D172. The Ca(2+) site is built by D172, Y174, N176, and D181. Position 174 (Y174) interacts with a carbohydrate. Positions 181 and 186 each coordinate Mn(2+). Residue K208 coordinates Ca(2+). S228 contacts a carbohydrate. Residues 281-291 (QLQDLRIASVV) constitute a propeptide, removed in mature form.

It belongs to the leguminous lectin family. The mature chain consists of residues 163-280 followed by residues 29-147. Concanavalin A-like lectins of the Diocleinae subtribe undergo proteolytic processing referred to as circular permutation. The propeptide is split into an N-terminal and a C-terminal part, the gamma and beta chain, respectively. These are then religated in beta-gamma order to form the mature alpha chain. The beta and gamma chains can often be detected in cell extracts.

In terms of biological role, D-mannose-binding lectin that also binds alpha-methyl-D-mannoside with even higher affinity. Has hemagglutinating activity against rabbit erythrocytes. Shows toxicity against the brine shrimp A.nauplii. Induces reversible paw edema and hypernociceptivity in rats. The sequence is that of Lectin from Dioclea lasiophylla.